A 799-amino-acid polypeptide reads, in one-letter code: ATP-dependent RNA helicase DBP7 (799 aa).

2 disordered regions span residues 34 to 177 (KALR…RRIR) and 201 to 229 (DRIA…NAAL). Composition is skewed to basic and acidic residues over residues 35–49 (ALRE…KKEQ), 56–66 (IEDRMKRREQD), 73–100 (KPYD…KSYD), 114–132 (EKYQ…ERWV), and 139–172 (NRRD…DGSL). A compositionally biased stretch (acidic residues) spans 208–220 (VQMEDEEEEEAEN). The short motif at 233-261 (TTFSGLGCSQRLVDALVGMQLAKPTKIQR) is the Q motif element. The Helicase ATP-binding domain occupies 265–465 (PRLIQRERDL…KSTLKDADWV (201 aa)). Residues 278–285 (AQTGSGKT) and 306–313 (TGLFAVIL) contribute to the ATP site. The short motif at 391 to 394 (DEGD) is the DEAD box element. Positions 511-679 (DILQSSEKTN…NILAAGFGGK (169 aa)) constitute a Helicase C-terminal domain. A disordered region spans residues 750–799 (KLGKKKDPEKIKVNKDGSLDETQARKKMLDRSRKHVYNSGESAMGGYVLE). A compositionally biased stretch (basic and acidic residues) spans 754–780 (KKDPEKIKVNKDGSLDETQARKKMLDR).

The protein belongs to the DEAD box helicase family. DDX31/DBP7 subfamily.

Its subcellular location is the nucleus. It is found in the nucleolus. The enzyme catalyses ATP + H2O = ADP + phosphate + H(+). ATP-binding RNA helicase involved in the biogenesis of 60S ribosomal subunits and is required for the normal formation of 25S and 5.8S rRNAs. This Yarrowia lipolytica (strain CLIB 122 / E 150) (Yeast) protein is ATP-dependent RNA helicase DBP7 (DBP7).